Reading from the N-terminus, the 569-residue chain is Probable santalene synthase (569 aa).

Residues Arg-284, Asp-321, Asp-325, Arg-460, and Asn-463 each contribute to the (2E)-geranyl diphosphate site. Mg(2+)-binding residues include Asp-321 and Asp-325. The DDXXD motif motif lies at 321–325 (DDAYD). Residues Asn-463, Thr-467, and Glu-471 each contribute to the Mg(2+) site.

The protein belongs to the terpene synthase family. Tpsb subfamily. Mg(2+) is required as a cofactor. Mn(2+) serves as cofactor.

Catalyzes the formation of santalene. This Santalum murrayanum (Bitter quandong) protein is Probable santalene synthase (SSY).